The primary structure comprises 119 residues: Mitochondrial coiled-coil domain protein 1 (119 aa).

Residues 1–24 (MVLPLPWLSRYHFLRLLLPSWSLA) constitute a mitochondrion transit peptide. Positions 25-65 (PQGSHGCCSQNPKASMEEQTSSRGNGKMTSPPRGPGTHRTA) are disordered. Residues 31–52 (CCSQNPKASMEEQTSSRGNGKM) are compositionally biased toward polar residues. The stretch at 62–116 (HRTAELARAEELLEQQLELYQALLEGQEGAWEAQALVLKIQKLKEQMRRHQESLG) forms a coiled coil.

As to expression, widely expressed. Expressed in adult and fetal liver, kidney and lung. Expressed in fetal brain. Weakly expressed in fetal spleen.

It localises to the mitochondrion. The chain is Mitochondrial coiled-coil domain protein 1 (MCCD1) from Homo sapiens (Human).